The sequence spans 192 residues: ADP-ribosylation factor-like protein 4C (192 aa).

Gly2 carries the N-myristoyl glycine lipid modification. GTP contacts are provided by residues 20 to 27, 68 to 72, and 127 to 130; these read GLDSAGKT, DVGGQ, and NKQD.

The protein belongs to the small GTPase superfamily. Arf family. Interacts with CYTH2. Interacts with alpha tubulin; interaction is independent on the ARL4C GTP or GDP binding status. As to expression, expressed in several tumor cell lines (at protein level). Expressed in lung, brain, leukocytes and placenta.

The protein resides in the cell projection. It is found in the filopodium. Its subcellular location is the cell membrane. It localises to the cytoplasm. Small GTP-binding protein which cycles between an inactive GDP-bound and an active GTP-bound form, and the rate of cycling is regulated by guanine nucleotide exchange factors (GEF) and GTPase-activating proteins (GAP). GTP-binding protein that does not act as an allosteric activator of the cholera toxin catalytic subunit. May be involved in transport between a perinuclear compartment and the plasma membrane, apparently linked to the ABCA1-mediated cholesterol secretion pathway. Recruits CYTH1, CYTH2, CYTH3 and CYTH4 to the plasma membrane in the GDP-bound form. Regulates the microtubule-dependent intracellular vesicular transport from early endosome to recycling endosome process. The chain is ADP-ribosylation factor-like protein 4C (ARL4C) from Homo sapiens (Human).